The chain runs to 128 residues: Large ribosomal subunit protein bL12 (128 aa).

The protein belongs to the bacterial ribosomal protein bL12 family. Homodimer. Part of the ribosomal stalk of the 50S ribosomal subunit. Forms a multimeric L10(L12)X complex, where L10 forms an elongated spine to which 2 to 4 L12 dimers bind in a sequential fashion. Binds GTP-bound translation factors.

In terms of biological role, forms part of the ribosomal stalk which helps the ribosome interact with GTP-bound translation factors. Is thus essential for accurate translation. In Corynebacterium efficiens (strain DSM 44549 / YS-314 / AJ 12310 / JCM 11189 / NBRC 100395), this protein is Large ribosomal subunit protein bL12.